Reading from the N-terminus, the 71-residue chain is DNA-directed RNA polymerase subunit epsilon (71 aa).

Belongs to the RNA polymerase subunit epsilon family. In terms of assembly, RNAP is composed of a core of 2 alpha, a beta and a beta' subunit. The core is associated with a delta subunit, and at least one of epsilon or omega. When a sigma factor is associated with the core the holoenzyme is formed, which can initiate transcription.

The enzyme catalyses RNA(n) + a ribonucleoside 5'-triphosphate = RNA(n+1) + diphosphate. Its function is as follows. A non-essential component of RNA polymerase (RNAP). This chain is DNA-directed RNA polymerase subunit epsilon, found in Anoxybacillus flavithermus (strain DSM 21510 / WK1).